The primary structure comprises 349 residues: tRNA pseudouridine synthase D (349 aa).

Substrate is bound at residue phenylalanine 27. The active-site Nucleophile is the aspartate 80. Asparagine 129 contributes to the substrate binding site. In terms of domain architecture, TRUD spans 155–303; the sequence is GVPNYFGAQR…VEAARRAMLL (149 aa). Substrate is bound at residue phenylalanine 329.

The protein belongs to the pseudouridine synthase TruD family.

The catalysed reaction is uridine(13) in tRNA = pseudouridine(13) in tRNA. In terms of biological role, responsible for synthesis of pseudouridine from uracil-13 in transfer RNAs. The sequence is that of tRNA pseudouridine synthase D from Shigella boydii serotype 4 (strain Sb227).